The primary structure comprises 88 residues: U-scoloptoxin(XY)-Er1b (88 aa).

The N-terminal stretch at 1 to 24 (MASQVVLSFALVVVLAVFVGQVDS) is a signal peptide. Residues 66–88 (RPELSPGALDDSSEEKDNEASLA) are disordered. A propeptide spanning residues 79–88 (EEKDNEASLA) is cleaved from the precursor.

This sequence belongs to the scoloptoxin-XY family. In terms of processing, contains 3 disulfide bonds. In terms of tissue distribution, expressed by the venom gland.

Its subcellular location is the secreted. This Ethmostigmus rubripes (Giant centipede) protein is U-scoloptoxin(XY)-Er1b.